The chain runs to 1019 residues: UPF0182 protein Tery_0938 (1019 aa).

Transmembrane regions (helical) follow at residues 23-43, 67-87, 128-148, 192-212, 213-233, 270-290, 313-333, 355-375, and 416-436; these read IHIL…GFST, TETW…LVNL, LSLS…GLIL, LWLL…PILW, LSVF…SHWA, FWLI…YLLS, LGGG…FELL, YVFL…QAIF, and AILT…PKIV.

Belongs to the UPF0182 family.

Its subcellular location is the cell membrane. The sequence is that of UPF0182 protein Tery_0938 from Trichodesmium erythraeum (strain IMS101).